Consider the following 286-residue polypeptide: Small ribosomal subunit protein uS3 (286 aa).

The region spanning 39-107 (VREYLKKKLA…PVHVNIEEIR (69 aa)) is the KH type-2 domain. Positions 213–286 (QAGAGTAAPQ…KPGVNDAAAS (74 aa)) are disordered. Residues 241–262 (GRADARSDGKAGEKKGPRKSDN) are compositionally biased toward basic and acidic residues.

Belongs to the universal ribosomal protein uS3 family. Part of the 30S ribosomal subunit. Forms a tight complex with proteins S10 and S14.

Binds the lower part of the 30S subunit head. Binds mRNA in the 70S ribosome, positioning it for translation. The polypeptide is Small ribosomal subunit protein uS3 (Nitrosospira multiformis (strain ATCC 25196 / NCIMB 11849 / C 71)).